Consider the following 660-residue polypeptide: Bifunctional polymyxin resistance protein ArnA (660 aa).

Residues M1–L304 are formyltransferase ArnAFT. Residue H86–I88 participates in (6R)-10-formyltetrahydrofolate binding. H104 (proton donor; for formyltransferase activity) is an active-site residue. Residues R114 and V136–D140 contribute to the (6R)-10-formyltetrahydrofolate site. The dehydrogenase ArnADH stretch occupies residues R314 to S660. NAD(+) contacts are provided by residues D347 and D368 to I369. UDP-alpha-D-glucuronate contacts are provided by residues A393, Y398, and T432–S433. Residue E434 is the Proton acceptor; for decarboxylase activity of the active site. Residues R460, N492, K526–R535, and Y613 each bind UDP-alpha-D-glucuronate. R619 serves as the catalytic Proton donor; for decarboxylase activity.

The protein in the N-terminal section; belongs to the Fmt family. UDP-L-Ara4N formyltransferase subfamily. It in the C-terminal section; belongs to the NAD(P)-dependent epimerase/dehydratase family. UDP-glucuronic acid decarboxylase subfamily. Homohexamer, formed by a dimer of trimers.

The enzyme catalyses UDP-alpha-D-glucuronate + NAD(+) = UDP-beta-L-threo-pentopyranos-4-ulose + CO2 + NADH. It carries out the reaction UDP-4-amino-4-deoxy-beta-L-arabinose + (6R)-10-formyltetrahydrofolate = UDP-4-deoxy-4-formamido-beta-L-arabinose + (6S)-5,6,7,8-tetrahydrofolate + H(+). The protein operates within nucleotide-sugar biosynthesis; UDP-4-deoxy-4-formamido-beta-L-arabinose biosynthesis; UDP-4-deoxy-4-formamido-beta-L-arabinose from UDP-alpha-D-glucuronate: step 1/3. It functions in the pathway nucleotide-sugar biosynthesis; UDP-4-deoxy-4-formamido-beta-L-arabinose biosynthesis; UDP-4-deoxy-4-formamido-beta-L-arabinose from UDP-alpha-D-glucuronate: step 3/3. Its pathway is bacterial outer membrane biogenesis; lipopolysaccharide biosynthesis. Functionally, bifunctional enzyme that catalyzes the oxidative decarboxylation of UDP-glucuronic acid (UDP-GlcUA) to UDP-4-keto-arabinose (UDP-Ara4O) and the addition of a formyl group to UDP-4-amino-4-deoxy-L-arabinose (UDP-L-Ara4N) to form UDP-L-4-formamido-arabinose (UDP-L-Ara4FN). The modified arabinose is attached to lipid A and is required for resistance to polymyxin and cationic antimicrobial peptides. The protein is Bifunctional polymyxin resistance protein ArnA of Shigella dysenteriae serotype 1 (strain Sd197).